We begin with the raw amino-acid sequence, 95 residues long: Co-chaperonin GroES (95 aa).

The protein belongs to the GroES chaperonin family. Heptamer of 7 subunits arranged in a ring. Interacts with the chaperonin GroEL.

It localises to the cytoplasm. Together with the chaperonin GroEL, plays an essential role in assisting protein folding. The GroEL-GroES system forms a nano-cage that allows encapsulation of the non-native substrate proteins and provides a physical environment optimized to promote and accelerate protein folding. GroES binds to the apical surface of the GroEL ring, thereby capping the opening of the GroEL channel. The protein is Co-chaperonin GroES of Chlorobaculum parvum (strain DSM 263 / NCIMB 8327) (Chlorobium vibrioforme subsp. thiosulfatophilum).